The primary structure comprises 280 residues: Suppressor of disruption of TFIIS (280 aa).

It belongs to the SSM1 family.

Could be an enzyme that inactivates 6-azauracil by modifying it. The sequence is that of Suppressor of disruption of TFIIS (SDT1) from Saccharomyces cerevisiae (strain ATCC 204508 / S288c) (Baker's yeast).